The sequence spans 389 residues: Succinate--CoA ligase [ADP-forming] subunit beta (389 aa).

An ATP-grasp domain is found at 9 to 244 (KAVLAKYGVP…LTEEDPAEVE (236 aa)). ATP is bound by residues K46, 53–55 (GRG), E99, S102, and E107. 2 residues coordinate Mg(2+): N199 and D213. Substrate contacts are provided by residues N264 and 321–323 (GIM).

It belongs to the succinate/malate CoA ligase beta subunit family. As to quaternary structure, heterotetramer of two alpha and two beta subunits. Requires Mg(2+) as cofactor.

It carries out the reaction succinate + ATP + CoA = succinyl-CoA + ADP + phosphate. The catalysed reaction is GTP + succinate + CoA = succinyl-CoA + GDP + phosphate. Its pathway is carbohydrate metabolism; tricarboxylic acid cycle; succinate from succinyl-CoA (ligase route): step 1/1. In terms of biological role, succinyl-CoA synthetase functions in the citric acid cycle (TCA), coupling the hydrolysis of succinyl-CoA to the synthesis of either ATP or GTP and thus represents the only step of substrate-level phosphorylation in the TCA. The beta subunit provides nucleotide specificity of the enzyme and binds the substrate succinate, while the binding sites for coenzyme A and phosphate are found in the alpha subunit. This chain is Succinate--CoA ligase [ADP-forming] subunit beta, found in Parvibaculum lavamentivorans (strain DS-1 / DSM 13023 / NCIMB 13966).